Reading from the N-terminus, the 437-residue chain is Enolase 2 (437 aa).

Lysine 60 participates in a covalent cross-link: Glycyl lysine isopeptide (Lys-Gly) (interchain with G-Cter in ubiquitin). Serine 138 is subject to Phosphoserine. The active site involves histidine 160. Serine 188 carries the phosphoserine modification. A Glycyl lysine isopeptide (Lys-Gly) (interchain with G-Cter in ubiquitin) cross-link involves residue lysine 243. The Mg(2+) site is built by aspartate 247 and glutamate 296. Threonine 313 is subject to Phosphothreonine. Aspartate 321 contributes to the Mg(2+) binding site. Position 324 is a phosphothreonine (threonine 324). Residue lysine 358 forms a Glycyl lysine isopeptide (Lys-Gly) (interchain with G-Cter in ubiquitin) linkage.

Belongs to the enolase family. Homodimer. Requires Mg(2+) as cofactor.

The protein localises to the cytoplasm. The enzyme catalyses (2R)-2-phosphoglycerate = phosphoenolpyruvate + H2O. Its pathway is carbohydrate degradation; glycolysis; pyruvate from D-glyceraldehyde 3-phosphate: step 4/5. In Saccharomyces cerevisiae (strain ATCC 204508 / S288c) (Baker's yeast), this protein is Enolase 2 (ENO2).